A 452-amino-acid chain; its full sequence is Putrescine hydroxycinnamoyltransferase (452 aa).

The active-site Proton acceptor is His151. The tract at residues 213 to 234 is disordered; sequence PAAGVDGDVGGDHKQQHGHGGE. The span at 222–234 shows a compositional bias: basic and acidic residues; the sequence is GGDHKQQHGHGGE. The Proton acceptor role is filled by Asp398.

Belongs to the plant acyltransferase family. Highly expressed in roots. Expressed at low levels in flowers.

Functionally, hydroxycinnamoyl transferase that catalyzes the transfer of an acyl from p-coumaryol-CoA to putrescine, to produce coumaroyl putrescine. Can use feruloyl-CoA, caffeoyl-CoA and sinapoyl-CoA as acyl donors. Seems to be able to transfer the acyl group from feruloyl-CoA to the acyl acceptors agmatine and spermidine. This chain is Putrescine hydroxycinnamoyltransferase, found in Oryza sativa subsp. japonica (Rice).